We begin with the raw amino-acid sequence, 137 residues long: Small ribosomal subunit protein uS9c (137 aa).

This sequence belongs to the universal ribosomal protein uS9 family.

It localises to the plastid. The protein localises to the chloroplast. This Mesostigma viride (Green alga) protein is Small ribosomal subunit protein uS9c (rps9).